The sequence spans 311 residues: Probable mitochondrial phosphate carrier protein (311 aa).

The Mitochondrial intermembrane segment spans residues 1 to 23; the sequence is MSTPLIPPAPPKKTLQLYTPQYY. Solcar repeat units follow at residues 21-105, 118-203, and 219-303; these read QYYG…FKHK, YRTS…IVEA, and EKIG…FKIM. A helical transmembrane segment spans residues 24 to 44; that stretch reads GLCTLGGLLACGTTHSAITPL. The Mitochondrial matrix portion of the chain corresponds to 45–67; that stretch reads DLIKCRKQVNPNIYPGNIAGFKT. A helical membrane pass occupies residues 68-88; the sequence is ILSKEGLRGLYTGGMPTLIGY. Over 89–120 the chain is Mitochondrial intermembrane; sequence SLQGCGKYGFYELFKHKYSTLVGAQKAHEYRT. The chain crosses the membrane as a helical span at residues 121–141; it reads SIYLAASASAELLADIMLCPM. Over 142 to 171 the chain is Mitochondrial matrix; the sequence is EAIKVRVQTSNPRFANTTREAWSKIVTNEG. The chain crosses the membrane as a helical span at residues 172-192; the sequence is FGTLYRGLAPLWFRQIPYTMM. Residues 193 to 220 lie on the Mitochondrial intermembrane side of the membrane; it reads KFASFERIVEALYTYIGKPKNMYSKAEK. The chain crosses the membrane as a helical span at residues 221-241; it reads IGISFAGGYMAGVLCAIISHP. At 242 to 269 the chain is on the mitochondrial matrix side; the sequence is ADVMVSKLNSNKKAGEGAGAAAARIYKE. Residues 270 to 290 form a helical membrane-spanning segment; it reads IGFSGLWNGLGVRIVMIGTLT. At 291–311 the chain is on the mitochondrial intermembrane side; sequence GAQWLIYDSFKIMCGFPATGA.

The protein belongs to the mitochondrial carrier (TC 2.A.29) family.

The protein localises to the mitochondrion inner membrane. Functionally, transport of phosphate groups from the cytosol to the mitochondrial matrix. The sequence is that of Probable mitochondrial phosphate carrier protein from Schizosaccharomyces pombe (strain 972 / ATCC 24843) (Fission yeast).